Here is a 393-residue protein sequence, read N- to C-terminus: Phosphopentomutase (393 aa).

Residues D11, D282, H287, D323, H324, and H335 each coordinate Mn(2+).

The protein belongs to the phosphopentomutase family. Requires Mn(2+) as cofactor.

It is found in the cytoplasm. It carries out the reaction 2-deoxy-alpha-D-ribose 1-phosphate = 2-deoxy-D-ribose 5-phosphate. The enzyme catalyses alpha-D-ribose 1-phosphate = D-ribose 5-phosphate. Its pathway is carbohydrate degradation; 2-deoxy-D-ribose 1-phosphate degradation; D-glyceraldehyde 3-phosphate and acetaldehyde from 2-deoxy-alpha-D-ribose 1-phosphate: step 1/2. Functionally, isomerase that catalyzes the conversion of deoxy-ribose 1-phosphate (dRib-1-P) and ribose 1-phosphate (Rib-1-P) to deoxy-ribose 5-phosphate (dRib-5-P) and ribose 5-phosphate (Rib-5-P), respectively. The protein is Phosphopentomutase of Caldanaerobacter subterraneus subsp. tengcongensis (strain DSM 15242 / JCM 11007 / NBRC 100824 / MB4) (Thermoanaerobacter tengcongensis).